The primary structure comprises 411 residues: UPF0597 protein Fnod_1278 (411 aa).

The protein belongs to the UPF0597 family.

The chain is UPF0597 protein Fnod_1278 from Fervidobacterium nodosum (strain ATCC 35602 / DSM 5306 / Rt17-B1).